The chain runs to 654 residues: DNA mismatch repair protein MutL (654 aa).

Residues 358–437 (KEHVRETMQQ…ADRRTDESLP (80 aa)) are disordered. Over residues 384-394 (TSIGNSWSPSH) the composition is skewed to polar residues. The segment covering 413-434 (RNERVETNTEEKYEQADRRTDE) has biased composition (basic and acidic residues).

This sequence belongs to the DNA mismatch repair MutL/HexB family.

Its function is as follows. This protein is involved in the repair of mismatches in DNA. It is required for dam-dependent methyl-directed DNA mismatch repair. May act as a 'molecular matchmaker', a protein that promotes the formation of a stable complex between two or more DNA-binding proteins in an ATP-dependent manner without itself being part of a final effector complex. The protein is DNA mismatch repair protein MutL of Shouchella clausii (strain KSM-K16) (Alkalihalobacillus clausii).